The following is a 471-amino-acid chain: UDP-N-acetylmuramate--L-alanine ligase (471 aa).

Position 114 to 120 (114 to 120) interacts with ATP; it reads GTHGKTT.

It belongs to the MurCDEF family.

Its subcellular location is the cytoplasm. The enzyme catalyses UDP-N-acetyl-alpha-D-muramate + L-alanine + ATP = UDP-N-acetyl-alpha-D-muramoyl-L-alanine + ADP + phosphate + H(+). It functions in the pathway cell wall biogenesis; peptidoglycan biosynthesis. Functionally, cell wall formation. In Allorhizobium ampelinum (strain ATCC BAA-846 / DSM 112012 / S4) (Agrobacterium vitis (strain S4)), this protein is UDP-N-acetylmuramate--L-alanine ligase.